Consider the following 266-residue polypeptide: Protein-ADP-ribose hydrolase (266 aa).

In terms of domain architecture, Macro spans 74 to 265 (TDLKDLKPIK…LYKEALNRDA (192 aa)). Asp-93, Ile-94, and Asn-107 together coordinate ADP-D-ribose. The Zn(2+) site is built by Cys-113, His-118, and Cys-120. The ADP-D-ribose site is built by Cys-120, Ile-121, Asp-122, Ser-212, Thr-213, Gly-214, and Phe-216.

It belongs to the MacroD-type family. Zn-Macro subfamily. In terms of assembly, monomer. Directly interacts with the lipoylated form of GcvH-L. Zn(2+) serves as cofactor.

The enzyme catalyses 4-O-(ADP-D-ribosyl)-L-aspartyl-[protein] + H2O = L-aspartyl-[protein] + ADP-D-ribose + H(+). Functionally, ADP-ribosylhydrolase that specifically reverses the SirTM-mediated mono-ADP-ribosylation at an asparatate residue of GcvH-L (SAV0324), by releasing ADP-ribose from the target protein. May play a role in the regulation of the response to host-induced oxidative stress. The chain is Protein-ADP-ribose hydrolase from Staphylococcus aureus (strain Mu50 / ATCC 700699).